The primary structure comprises 200 residues: Holliday junction branch migration complex subunit RuvA (200 aa).

Positions 1–63 (MYAYVKGKLT…EDAQLLYGFS (63 aa)) are domain I. Residues 64 to 142 (SEEEKDMFLS…ITEEDSDSLL (79 aa)) form a domain II region. A flexible linker region spans residues 143–149 (QVDATST). The segment at 150 to 200 (VQDQFVQEAMLALEALGYSKRELAKVEKTLNKNKYDSVDEAVKAGLQLVVS) is domain III.

Belongs to the RuvA family. Homotetramer. Forms an RuvA(8)-RuvB(12)-Holliday junction (HJ) complex. HJ DNA is sandwiched between 2 RuvA tetramers; dsDNA enters through RuvA and exits via RuvB. An RuvB hexamer assembles on each DNA strand where it exits the tetramer. Each RuvB hexamer is contacted by two RuvA subunits (via domain III) on 2 adjacent RuvB subunits; this complex drives branch migration. In the full resolvosome a probable DNA-RuvA(4)-RuvB(12)-RuvC(2) complex forms which resolves the HJ.

The protein localises to the cytoplasm. In terms of biological role, the RuvA-RuvB-RuvC complex processes Holliday junction (HJ) DNA during genetic recombination and DNA repair, while the RuvA-RuvB complex plays an important role in the rescue of blocked DNA replication forks via replication fork reversal (RFR). RuvA specifically binds to HJ cruciform DNA, conferring on it an open structure. The RuvB hexamer acts as an ATP-dependent pump, pulling dsDNA into and through the RuvAB complex. HJ branch migration allows RuvC to scan DNA until it finds its consensus sequence, where it cleaves and resolves the cruciform DNA. This chain is Holliday junction branch migration complex subunit RuvA, found in Staphylococcus aureus (strain Mu3 / ATCC 700698).